We begin with the raw amino-acid sequence, 440 residues long: MTAIADSAGGAGETVLVAGGQDWQQVVDAARSADPGERIVVNMGPQHPSTHGVLRLILEIEGETVVEARCGIGYLHTGIEKNLEYRYWTQGVTFVTRMDYLSPFFNETAYCLGVEKLLGITDEIPERVNVIRVLMMELNRISSHLVALATGGMELGAMTPMFVGFRAREIVLTLFEKITGLRMNSAYIRPGGVAQDLPPNAATEIAEALKQLRQPLREMGELLNENAIWKARTQGVGYLDLTGCMALGITGPILRSTGLPHDLRKSEPYCGYQHYEFDVITDDSCDAYGRYMIRVKEMWESMKIVEQCLDKLRPGPTMISDRKLAWPADLQVGPDGLGNSPKHIAKIMGSSMEALIHHFKLVTEGIRVPAGQVYVAVESPRGELGVHMVSDGGTRPYRVHYRDPSFTNLQSVAAMCEGGMVADLIAAVASIDPVMGGVDR.

The protein belongs to the complex I 49 kDa subunit family. NDH-1 is composed of 14 different subunits. Subunits NuoB, C, D, E, F, and G constitute the peripheral sector of the complex.

It is found in the cell membrane. The catalysed reaction is a quinone + NADH + 5 H(+)(in) = a quinol + NAD(+) + 4 H(+)(out). In terms of biological role, NDH-1 shuttles electrons from NADH, via FMN and iron-sulfur (Fe-S) centers, to quinones in the respiratory chain. The immediate electron acceptor for the enzyme in this species is believed to be a menaquinone. Couples the redox reaction to proton translocation (for every two electrons transferred, four hydrogen ions are translocated across the cytoplasmic membrane), and thus conserves the redox energy in a proton gradient. The protein is NADH-quinone oxidoreductase subunit D of Mycobacterium bovis (strain ATCC BAA-935 / AF2122/97).